Consider the following 303-residue polypeptide: ATP synthase gamma chain (303 aa).

Belongs to the ATPase gamma chain family. F-type ATPases have 2 components, CF(1) - the catalytic core - and CF(0) - the membrane proton channel. CF(1) has five subunits: alpha(3), beta(3), gamma(1), delta(1), epsilon(1). CF(0) has three main subunits: a, b and c.

The protein resides in the cell inner membrane. Produces ATP from ADP in the presence of a proton gradient across the membrane. The gamma chain is believed to be important in regulating ATPase activity and the flow of protons through the CF(0) complex. This Bartonella quintana (strain Toulouse) (Rochalimaea quintana) protein is ATP synthase gamma chain.